Consider the following 1155-residue polypeptide: Pesticidal crystal protein Cry1Ab (1155 aa).

It belongs to the delta endotoxin family.

In terms of biological role, promotes colloidosmotic lysis by binding to the midgut epithelial cells of many lepidopteran larvae. The protein is Pesticidal crystal protein Cry1Ab (cry1Ab) of Bacillus thuringiensis subsp. aizawai.